Reading from the N-terminus, the 187-residue chain is Cell division protein SepF (187 aa).

It belongs to the SepF family. In terms of assembly, homodimer. Interacts with FtsZ.

It is found in the cytoplasm. Its function is as follows. Cell division protein that is part of the divisome complex and is recruited early to the Z-ring. Probably stimulates Z-ring formation, perhaps through the cross-linking of FtsZ protofilaments. Its function overlaps with FtsA. This chain is Cell division protein SepF, found in Streptococcus suis (strain 98HAH33).